Consider the following 228-residue polypeptide: 2-C-methyl-D-erythritol 4-phosphate cytidylyltransferase (228 aa).

The protein belongs to the IspD/TarI cytidylyltransferase family. IspD subfamily.

The enzyme catalyses 2-C-methyl-D-erythritol 4-phosphate + CTP + H(+) = 4-CDP-2-C-methyl-D-erythritol + diphosphate. The protein operates within isoprenoid biosynthesis; isopentenyl diphosphate biosynthesis via DXP pathway; isopentenyl diphosphate from 1-deoxy-D-xylulose 5-phosphate: step 2/6. In terms of biological role, catalyzes the formation of 4-diphosphocytidyl-2-C-methyl-D-erythritol from CTP and 2-C-methyl-D-erythritol 4-phosphate (MEP). The sequence is that of 2-C-methyl-D-erythritol 4-phosphate cytidylyltransferase from Mannheimia succiniciproducens (strain KCTC 0769BP / MBEL55E).